Reading from the N-terminus, the 194-residue chain is Peptidyl-tRNA hydrolase (194 aa).

Residue tyrosine 17 coordinates tRNA. Histidine 22 (proton acceptor) is an active-site residue. Positions 68, 70, and 116 each coordinate tRNA.

Belongs to the PTH family. Monomer.

Its subcellular location is the cytoplasm. It carries out the reaction an N-acyl-L-alpha-aminoacyl-tRNA + H2O = an N-acyl-L-amino acid + a tRNA + H(+). Its function is as follows. Hydrolyzes ribosome-free peptidyl-tRNAs (with 1 or more amino acids incorporated), which drop off the ribosome during protein synthesis, or as a result of ribosome stalling. Functionally, catalyzes the release of premature peptidyl moieties from peptidyl-tRNA molecules trapped in stalled 50S ribosomal subunits, and thus maintains levels of free tRNAs and 50S ribosomes. The polypeptide is Peptidyl-tRNA hydrolase (Glaesserella parasuis serovar 5 (strain SH0165) (Haemophilus parasuis)).